The sequence spans 179 residues: Large ribosomal subunit protein uL5 (179 aa).

The protein belongs to the universal ribosomal protein uL5 family. Part of the 50S ribosomal subunit; part of the 5S rRNA/L5/L18/L25 subcomplex. Contacts the 5S rRNA and the P site tRNA. Forms a bridge to the 30S subunit in the 70S ribosome.

Functionally, this is one of the proteins that bind and probably mediate the attachment of the 5S RNA into the large ribosomal subunit, where it forms part of the central protuberance. In the 70S ribosome it contacts protein S13 of the 30S subunit (bridge B1b), connecting the 2 subunits; this bridge is implicated in subunit movement. Contacts the P site tRNA; the 5S rRNA and some of its associated proteins might help stabilize positioning of ribosome-bound tRNAs. The protein is Large ribosomal subunit protein uL5 of Enterococcus faecalis (strain ATCC 700802 / V583).